A 317-amino-acid polypeptide reads, in one-letter code: Melanocyte-stimulating hormone receptor (317 aa).

Over 1 to 37 (MPVQGSQRRLLGSLNSTPTATPHLGLAANQTGARCLE) the chain is Extracellular. N-linked (GlcNAc...) asparagine glycosylation is present at asparagine 29. A helical transmembrane segment spans residues 38 to 63 (VSVPDGLFLSLGLVSLVENVLVVTAI). At 64–72 (AKNRNLHSP) the chain is on the cytoplasmic side. Residues 73-93 (MYCFICCLALSDLLVSGSNML) form a helical membrane-spanning segment. Residues 94-118 (ETAVTLLLEAGALAARAAVVQQLDN) lie on the Extracellular side of the membrane. The helical transmembrane segment at 119–140 (VIDVITCSSMLSSLCFLGAIAV) threads the bilayer. The Cytoplasmic segment spans residues 141-163 (DRYISIFYALRYHSIVTLPRARR). The helical transmembrane segment at 164 to 183 (AVAAIWVASVLCSTLFIAYY) threads the bilayer. Over 184–191 (DHAAVLLC) the chain is Extracellular. A helical transmembrane segment spans residues 192-211 (LVVFFLAMLVLMAVLYVHML). The Cytoplasmic segment spans residues 212–240 (ARACQHAQGIARLHKRQRLAHQGFGLKGA). The helical transmembrane segment at 241 to 266 (ATLTILLGIFFLCWGPFFLHLTLIVL) threads the bilayer. Over 267 to 279 (CPQHPTCSCIFKN) the chain is Extracellular. A helical membrane pass occupies residues 280–300 (FNLFLALIICNAIIDPLIYAF). Over 301–317 (RSQELRRTLKEVLLCSW) the chain is Cytoplasmic. Cysteine 315 carries the S-palmitoyl cysteine lipid modification.

Belongs to the G-protein coupled receptor 1 family. As to quaternary structure, interacts with MGRN1, but does not undergo MGRN1-mediated ubiquitination; this interaction competes with GNAS-binding and thus inhibits agonist-induced cAMP production. Interacts with OPN3; the interaction results in a decrease in MC1R-mediated cAMP signaling and ultimately a decrease in melanin production in melanocytes.

Its subcellular location is the cell membrane. Receptor for MSH (alpha, beta and gamma) and ACTH. The activity of this receptor is mediated by G proteins which activate adenylate cyclase. Mediates melanogenesis, the production of eumelanin (black/brown) and phaeomelanin (red/yellow), via regulation of cAMP signaling in melanocytes. The chain is Melanocyte-stimulating hormone receptor (MC1R) from Macaca sylvanus (Barbary macaque).